The following is a 387-amino-acid chain: Phosphoglycerate kinase (387 aa).

Residues 21 to 23, Arg36, and 59 to 62 each bind substrate; these read DLN and HLGR. Lys84 is modified (N6-acetyllysine). 2 residues coordinate substrate: Arg113 and Arg146. ATP contacts are provided by residues Lys197, Glu314, and 340-343; that span reads GGDT.

The protein belongs to the phosphoglycerate kinase family. Monomer.

Its subcellular location is the cytoplasm. The enzyme catalyses (2R)-3-phosphoglycerate + ATP = (2R)-3-phospho-glyceroyl phosphate + ADP. The protein operates within carbohydrate degradation; glycolysis; pyruvate from D-glyceraldehyde 3-phosphate: step 2/5. This Escherichia coli O157:H7 protein is Phosphoglycerate kinase (pgk).